The primary structure comprises 63 residues: MEEMSYGENSGTHVGSFSCSPQPSQQMKVLFVGNSFLLTPVLHRQPHLQPCNFGPEVVAPQRL.

This is an uncharacterized protein from Homo sapiens (Human).